The chain runs to 746 residues: Exostosin-1 (746 aa).

Residues 1 to 7 are Cytoplasmic-facing; the sequence is MQAKKRY. Residues 8 to 28 form a helical; Signal-anchor for type II membrane protein membrane-spanning segment; that stretch reads FILLSAGSCLALLFYFGGLQF. Residues 29–746 lie on the Lumenal side of the membrane; the sequence is RASRSHSRRE…RKKYRDIERL (718 aa). An N-linked (GlcNAc...) asparagine glycan is attached at Asn89. 2 disulfides stabilise this stretch: Cys98–Cys103 and Cys109–Cys152. Positions 166 and 203 each coordinate a protein. Residues Lys267, Lys269, Tyr271, and Arg280 each coordinate UDP. Cys298 and Cys312 are oxidised to a cystine. His300 provides a ligand contact to a protein. 2 residues coordinate UDP: Tyr319 and Tyr324. Asn330 carries N-linked (GlcNAc...) asparagine glycosylation. Disulfide bonds link Cys334–Cys355 and Cys652–Cys704. 2 residues coordinate UDP: Arg346 and Glu349.

It belongs to the glycosyltransferase 47 family. As to quaternary structure, part of the heparan sulfate polymerase, a dimeric complex composed of EXT1 and EXT2. Could also form homooligomeric complexes. Interacts with NDST1. N-glycosylated.

The protein resides in the golgi apparatus membrane. It localises to the golgi apparatus. It is found in the cis-Golgi network membrane. The protein localises to the endoplasmic reticulum membrane. The catalysed reaction is 3-O-{alpha-D-GlcNAc-[(1-&gt;4)-beta-D-GlcA-(1-&gt;4)-alpha-D-GlcNAc](n)-(1-&gt;4)-beta-D-GlcA-(1-&gt;3)-beta-D-Gal-(1-&gt;3)-beta-D-Gal-(1-&gt;4)-beta-D-Xyl}-L-seryl-[protein] + UDP-alpha-D-glucuronate = 3-O-{[(1-&gt;4)-beta-D-GlcA-(1-&gt;4)-alpha-D-GlcNAc](n+1)-(1-&gt;4)-beta-D-GlcA-(1-&gt;3)-beta-D-Gal-(1-&gt;3)-beta-D-Gal-(1-&gt;4)-beta-D-Xyl}-L-seryl-[protein] + UDP + H(+). It functions in the pathway protein modification; protein glycosylation. Its function is as follows. Glycosyltransferase forming with EXT2 the heterodimeric heparan sulfate polymerase which catalyzes the elongation of the heparan sulfate glycan backbone. Glycan backbone extension consists in the alternating transfer of (1-&gt;4)-beta-D-GlcA and (1-&gt;4)-alpha-D-GlcNAc residues from their respective UDP-sugar donors. Both EXT1 and EXT2 are required for the full activity of the polymerase since EXT1 bears the N-acetylglucosaminyl-proteoglycan 4-beta-glucuronosyltransferase activity within the complex while EXT2 carries the glucuronosyl-N-acetylglucosaminyl-proteoglycan 4-alpha-N-acetylglucosaminyltransferase activity. Heparan sulfate proteoglycans are ubiquitous components of the extracellular matrix and play an important role in tissue homeostasis and signaling. The sequence is that of Exostosin-1 (EXT1) from Bos taurus (Bovine).